Consider the following 276-residue polypeptide: MEQWRYIVTEAMSPAMNMAVDEAILQLHSEGKVPPTVRFYTWDPATLSIGYFQKAIKEINLEEVQNRGLGFVRRATGGRAVLHDQELTYSVIVSEDHPKMPSSVTEAYKIISLGLLHGFQNLGLSAEMVSLASEEEKEKYNSPGSSACFDSPSWYELVVEGKKVAGSAQTRQKGVILQHGSILLDMDVDLLFSLLHFPSERVKQRMIDSFRQKAVTINEVSSRPISLQESIEAFSKGFASGLEVELTPSTLTDEELALAEELVRTRYATDEWNLRR.

Positions 31–246 constitute a BPL/LPL catalytic domain; the sequence is GKVPPTVRFY…GFASGLEVEL (216 aa). Residue cysteine 148 is the Acyl-thioester intermediate of the active site.

Belongs to the octanoyltransferase LipM family. In terms of assembly, monomer.

The catalysed reaction is octanoyl-[ACP] + L-lysyl-[protein] = N(6)-octanoyl-L-lysyl-[protein] + holo-[ACP] + H(+). Its pathway is protein modification; protein lipoylation via endogenous pathway; protein N(6)-(lipoyl)lysine from octanoyl-[acyl-carrier-protein]. Functionally, catalyzes the transfer of endogenously produced octanoic acid from octanoyl-acyl-carrier-protein onto the lipoyl domain of GcvH, an intermediate carrier during protein lipoylation. The protein is Octanoyltransferase LipM of Brevibacillus brevis (strain 47 / JCM 6285 / NBRC 100599).